The primary structure comprises 61 residues: Opistoporin-4 (61 aa).

Positions 45–61 are excised as a propeptide; it reads EAGQMPFDEFMDILHYY.

The protein belongs to the non-disulfide-bridged peptide (NDBP) superfamily. Long chain multifunctional peptide (group 2) family. As to expression, expressed by the venom gland.

The protein localises to the secreted. It localises to the target cell membrane. At high concentrations, acts as a pore former in cellular membranes and causes the leakage of the cells. At submicromolar concentrations, degranulates granulocytes and has a weak hemolytic activity against human erythrocytes. Also strongly inhibits the production of superoxide anions. Has a strong antibacterial activity against Gram-negative bacteria but is less active against Gram-positive bacteria. Also has antifungal activity. This chain is Opistoporin-4, found in Opistophthalmus carinatus (African yellow leg scorpion).